The chain runs to 142 residues: Boophilin-G2 (142 aa).

A signal peptide spans 1–15 (MKYLILLAVLGTAFA). Residue Gln-16 is modified to Pyrrolidone carboxylic acid. BPTI/Kunitz inhibitor domains follow at residues 21-71 (CRLP…QKAC) and 89-139 (CEPA…ELVC). 6 cysteine pairs are disulfide-bonded: Cys-21–Cys-71, Cys-30–Cys-54, Cys-46–Cys-67, Cys-89–Cys-139, Cys-98–Cys-122, and Cys-114–Cys-135.

Interacts with host thrombin and trypsin. In terms of processing, the N-terminus is blocked. As to expression, expressed in the midgut.

It localises to the secreted. In terms of biological role, midgut thrombin inhibitor that plays a major role in keeping the midgut microenvironment at low hemostatic and inflammatory tonus. Also inhibits FXIa (F11), kallikrein (KLK1), neutrophil elastase (ELANE) and cathepsin G (CTSG), which play a role in the contact pathway of the coagulation cascade. Also abrogates platelet aggregation by cathepsin G and plasmin, and attenuates tissue factor (F3) pathway inhibitor cleavage by elastase. In vivo, inhibits thrombosis and promotes bleeding in mice. The chain is Boophilin-G2 from Rhipicephalus microplus (Cattle tick).